A 178-amino-acid polypeptide reads, in one-letter code: ATP-dependent protease subunit HslV (178 aa).

T7 is an active-site residue. Positions 162, 165, and 168 each coordinate Na(+).

Belongs to the peptidase T1B family. HslV subfamily. A double ring-shaped homohexamer of HslV is capped on each side by a ring-shaped HslU homohexamer. The assembly of the HslU/HslV complex is dependent on binding of ATP.

It is found in the cytoplasm. The enzyme catalyses ATP-dependent cleavage of peptide bonds with broad specificity.. Its activity is regulated as follows. Allosterically activated by HslU binding. Protease subunit of a proteasome-like degradation complex believed to be a general protein degrading machinery. The polypeptide is ATP-dependent protease subunit HslV (Dechloromonas aromatica (strain RCB)).